Reading from the N-terminus, the 247-residue chain is NADH dehydrogenase [ubiquinone] flavoprotein 2, mitochondrial (247 aa).

The N-terminal 40 residues, 1–40 (MFRSLLKRTTFLNQLNKSNGFNRNYFKQSTLTRSDALSRH), are a transit peptide targeting the mitochondrion. [2Fe-2S] cluster contacts are provided by Cys135, Cys140, Cys176, and Cys180. The disordered stretch occupies residues 211–247 (NKPTKIGPQTHRKAAEGPQGKTTLLEPPVGPTCRDDL).

It belongs to the complex I 24 kDa subunit family. Complex I is composed of 45 different subunits. This is a component of the flavoprotein-sulfur (FP) fragment of the enzyme. The cofactor is [2Fe-2S] cluster.

Its subcellular location is the mitochondrion inner membrane. The catalysed reaction is a ubiquinone + NADH + 5 H(+)(in) = a ubiquinol + NAD(+) + 4 H(+)(out). Its function is as follows. Core subunit of the mitochondrial membrane respiratory chain NADH dehydrogenase (Complex I) that is believed to belong to the minimal assembly required for catalysis. Complex I functions in the transfer of electrons from NADH to the respiratory chain. The immediate electron acceptor for the enzyme is believed to be ubiquinone. The chain is NADH dehydrogenase [ubiquinone] flavoprotein 2, mitochondrial (ndufv2) from Dictyostelium discoideum (Social amoeba).